The following is a 763-amino-acid chain: Pentatricopeptide repeat-containing protein At4g32430, mitochondrial (763 aa).

A mitochondrion-targeting transit peptide spans 1 to 38 (MTLLNYLHCNRSKSFLFQRFYSPYRIAHKLFDGSSQRN). 17 PPR repeats span residues 77–109 (DEVT…GFTS), 110–140 (FVCV…LVDP), 141–172 (DVVS…GVVF), 173–207 (DAFT…GLES), 208–238 (DLVV…MSFK), 239–274 (DMIS…GVEL), 275–309 (DHVS…GYES), 310–344 (LLEV…NVVS), 350–370 (SSNK…GVYP), 371–405 (NEVT…GFVS), 406–436 (EPSV…ITFR), 437–471 (EIIS…TMPN), 472–507 (EYTF…GLNS), 508–538 (CPVV…MSQK), 539–573 (NQFV…NVAP), 574–604 (DLVT…MIEV), and 610–640 (SHEH…VPGG). Residues 645–720 (MLQSMLGSCR…EAGFSWIDVG (76 aa)) form a type E motif region. Positions 724–756 (GSLTMQGFSSGDKSHPKSDEIYRMVEIIGLEMN) are type E(+) motif.

It belongs to the PPR family. PCMP-E subfamily.

The protein resides in the mitochondrion. The chain is Pentatricopeptide repeat-containing protein At4g32430, mitochondrial (PCMP-E40) from Arabidopsis thaliana (Mouse-ear cress).